A 237-amino-acid chain; its full sequence is Phosphoribosylaminoimidazole-succinocarboxamide synthase (237 aa).

Belongs to the SAICAR synthetase family.

It carries out the reaction 5-amino-1-(5-phospho-D-ribosyl)imidazole-4-carboxylate + L-aspartate + ATP = (2S)-2-[5-amino-1-(5-phospho-beta-D-ribosyl)imidazole-4-carboxamido]succinate + ADP + phosphate + 2 H(+). It participates in purine metabolism; IMP biosynthesis via de novo pathway; 5-amino-1-(5-phospho-D-ribosyl)imidazole-4-carboxamide from 5-amino-1-(5-phospho-D-ribosyl)imidazole-4-carboxylate: step 1/2. The sequence is that of Phosphoribosylaminoimidazole-succinocarboxamide synthase from Enterobacter sp. (strain 638).